Reading from the N-terminus, the 314-residue chain is Glutamyl-Q tRNA(Asp) synthetase (314 aa).

L-glutamate is bound by residues 14-18 (RFAPS) and E50. The 'HIGH' region motif lies at 17–27 (PSPTGPLHVGS). Residues C106, C108, Y129, and C133 each contribute to the Zn(2+) site. Residues Y187 and R205 each contribute to the L-glutamate site. The 'KMSKS' region motif lies at 243–247 (KLSKR). K246 contributes to the ATP binding site.

Belongs to the class-I aminoacyl-tRNA synthetase family. GluQ subfamily. Requires Zn(2+) as cofactor.

Catalyzes the tRNA-independent activation of glutamate in presence of ATP and the subsequent transfer of glutamate onto a tRNA(Asp). Glutamate is transferred on the 2-amino-5-(4,5-dihydroxy-2-cyclopenten-1-yl) moiety of the queuosine in the wobble position of the QUC anticodon. This is Glutamyl-Q tRNA(Asp) synthetase from Geobacter sulfurreducens (strain ATCC 51573 / DSM 12127 / PCA).